The sequence spans 216 residues: Probable transaldolase (216 aa).

The active-site Schiff-base intermediate with substrate is Lys83.

The protein belongs to the transaldolase family. Type 3B subfamily.

It localises to the cytoplasm. It catalyses the reaction D-sedoheptulose 7-phosphate + D-glyceraldehyde 3-phosphate = D-erythrose 4-phosphate + beta-D-fructose 6-phosphate. The protein operates within carbohydrate degradation; pentose phosphate pathway; D-glyceraldehyde 3-phosphate and beta-D-fructose 6-phosphate from D-ribose 5-phosphate and D-xylulose 5-phosphate (non-oxidative stage): step 2/3. In terms of biological role, transaldolase is important for the balance of metabolites in the pentose-phosphate pathway. The protein is Probable transaldolase of Thermoanaerobacter sp. (strain X514).